The primary structure comprises 279 residues: Tryptophan synthase alpha chain (279 aa).

Catalysis depends on proton acceptor residues Glu50 and Asp61.

The protein belongs to the TrpA family. In terms of assembly, tetramer of two alpha and two beta chains.

The catalysed reaction is (1S,2R)-1-C-(indol-3-yl)glycerol 3-phosphate + L-serine = D-glyceraldehyde 3-phosphate + L-tryptophan + H2O. Its pathway is amino-acid biosynthesis; L-tryptophan biosynthesis; L-tryptophan from chorismate: step 5/5. Functionally, the alpha subunit is responsible for the aldol cleavage of indoleglycerol phosphate to indole and glyceraldehyde 3-phosphate. This chain is Tryptophan synthase alpha chain, found in Brucella suis (strain ATCC 23445 / NCTC 10510).